The following is a 185-amino-acid chain: GTP cyclohydrolase 1 (185 aa).

Zn(2+) contacts are provided by Cys76, His79, and Cys147.

It belongs to the GTP cyclohydrolase I family. In terms of assembly, toroid-shaped homodecamer, composed of two pentamers of five dimers.

The catalysed reaction is GTP + H2O = 7,8-dihydroneopterin 3'-triphosphate + formate + H(+). It functions in the pathway cofactor biosynthesis; 7,8-dihydroneopterin triphosphate biosynthesis; 7,8-dihydroneopterin triphosphate from GTP: step 1/1. In Clostridium perfringens (strain ATCC 13124 / DSM 756 / JCM 1290 / NCIMB 6125 / NCTC 8237 / Type A), this protein is GTP cyclohydrolase 1.